We begin with the raw amino-acid sequence, 241 residues long: MATPHINAQMGDFADVVLMPGDPLRAKYIAENFLDNAVQVCDVRNMFGYTGTYKGRKISVMGHGMGIPSCSIYVTELIKDYGVKKIIRVGSCGAVNEGIKVRDVVIGMGACTDSKVNRIRFKDHDFAAIADYKMVKAAEEAAKARGIDVKVGNLFSAELFYTPDPSMFDVMDKYGIVGVEMEAAGIYGVAAEYGAKALAICTVSDHIKTGEQTTSEERQNTFNEMIEIALDSVLIGDQAGY.

Position 5 (histidine 5) interacts with a purine D-ribonucleoside. Phosphate is bound by residues glycine 21, arginine 25, arginine 44, and 88 to 91 (RVGS). Residues 180–182 (EME) and 204–205 (SD) contribute to the a purine D-ribonucleoside site. Aspartate 205 serves as the catalytic Proton donor.

Belongs to the PNP/UDP phosphorylase family. In terms of assembly, homohexamer; trimer of homodimers.

It catalyses the reaction a purine D-ribonucleoside + phosphate = a purine nucleobase + alpha-D-ribose 1-phosphate. The enzyme catalyses a purine 2'-deoxy-D-ribonucleoside + phosphate = a purine nucleobase + 2-deoxy-alpha-D-ribose 1-phosphate. In terms of biological role, catalyzes the reversible phosphorolytic breakdown of the N-glycosidic bond in the beta-(deoxy)ribonucleoside molecules, with the formation of the corresponding free purine bases and pentose-1-phosphate. In Vibrio cholerae serotype O1 (strain ATCC 39315 / El Tor Inaba N16961), this protein is Purine nucleoside phosphorylase DeoD-type 1.